The primary structure comprises 485 residues: MNESVTVRGKDRYKSGVMEYKKMGYWEPDYEPKDTDVIALFRVTPQDGVDPIEASAAVAGESSTATWTVVWTDRLTAAEKYRAKCYRVDPVPNSPGQYFAYIAYDLDLFENGSIANLSASIIGNVFGFKPLKALRLEDMRLPVAYVKTFQGPATGIVVERERMDKFGRPLLGATVKPKLGLSGRNYGRVVYEALKGGLDFTKDDENINSQPFMHWRERFLYCMEAVNKAQAASGEIKGTYLNVTAGTMEDMYERAEFAKQLGSVIIMIDLVIGYTAIQSMAKWARKNDMILHLHRAGHSTYTRQRNHGVSFRVIAKWMRLAGVDHIHAGTVVGKLEGDPATTRGYYDICREDHNPMALEHGVFFEQNWASLNKLMPVASGGIHAGQMHQLLDHLGEDVVLQFGGGTIGHPMGIQAGATANRVALEAMILARNEGRDYLHEGPEILAKAAQTCTPLKAALETWKNVTFNYESTDMPDYAPTPSVSV.

Substrate-binding residues include Asn124 and Thr174. Lys176 (proton acceptor) is an active-site residue. Substrate is bound at residue Lys178. Positions 202, 204, and 205 each coordinate Mg(2+). Lys202 carries the post-translational modification N6-carboxylysine. The Proton acceptor role is filled by His294. Arg295, His327, and Ser379 together coordinate substrate.

It belongs to the RuBisCO large chain family. Type I subfamily. Heterohexadecamer of 8 large chains and 8 small chains. Mg(2+) serves as cofactor.

The enzyme catalyses 2 (2R)-3-phosphoglycerate + 2 H(+) = D-ribulose 1,5-bisphosphate + CO2 + H2O. The catalysed reaction is D-ribulose 1,5-bisphosphate + O2 = 2-phosphoglycolate + (2R)-3-phosphoglycerate + 2 H(+). RuBisCO catalyzes two reactions: the carboxylation of D-ribulose 1,5-bisphosphate, the primary event in carbon dioxide fixation, as well as the oxidative fragmentation of the pentose substrate. Both reactions occur simultaneously and in competition at the same active site. This chain is Ribulose bisphosphate carboxylase large chain, found in Rhodopseudomonas palustris (strain BisA53).